The sequence spans 148 residues: Glycine cleavage system H protein 5 (148 aa).

The Lipoyl-binding domain occupies 33-115 (VFTIGLTSVA…YGQGWIAKVK (83 aa)). N6-lipoyllysine is present on Lys74.

It belongs to the GcvH family. As to quaternary structure, the glycine cleavage system is composed of four proteins: P, T, L and H. Requires (R)-lipoate as cofactor.

The glycine cleavage system catalyzes the degradation of glycine. The H protein shuttles the methylamine group of glycine from the P protein to the T protein. The polypeptide is Glycine cleavage system H protein 5 (Aquifex aeolicus (strain VF5)).